A 452-amino-acid polypeptide reads, in one-letter code: Na(+)/H(+) antiporter NhaA (452 aa).

11 helical membrane passes run 27 to 47 (FLHI…TALI), 78 to 98 (LHFW…GMEI), 114 to 134 (ILPI…YLSF), 141 to 161 (IYGW…ILAL), 172 to 192 (IILL…IAFF), 201 to 221 (GLAI…ISFA), 222 to 242 (SAWL…VTGI), 316 to 336 (PWVA…VSFA), 346 to 366 (FLIV…GILA), 388 to 408 (ILLI…VSML), and 421 to 441 (IGVL…GLIY).

Belongs to the NhaA Na(+)/H(+) (TC 2.A.33) antiporter family.

It is found in the cell inner membrane. It carries out the reaction Na(+)(in) + 2 H(+)(out) = Na(+)(out) + 2 H(+)(in). Functionally, na(+)/H(+) antiporter that extrudes sodium in exchange for external protons. This is Na(+)/H(+) antiporter NhaA from Bartonella bacilliformis (strain ATCC 35685 / KC583 / Herrer 020/F12,63).